The following is a 301-amino-acid chain: Hydroxymycolate synthase MmaA4 (301 aa).

S-adenosyl-L-methionine is bound by residues 42–43 (YS), 81–83 (GCG), 103–108 (TLSKNQ), 132–133 (WE), and Ile-145. Residue Cys-278 is part of the active site.

This sequence belongs to the CFA/CMAS family. In terms of assembly, monomer.

Its pathway is lipid metabolism; mycolic acid biosynthesis. With respect to regulation, inhibited by S-adenosyl-N-decyl-aminoethyl (SADAE). Its function is as follows. Involved in the biosynthesis of hydroxymycolate, a common precursor of oxygenated mycolic acids (methoxy-mycolate and keto-mycolate). Probably transfers a methyl group from the S-adenosylmethionine (SAM) cofactor and, subsequently or simultaneously, a water molecule onto the double bound of ethylene substrates, leading to the formation of the hydroxylated product at the distal position. Involved in the activation of the antitubercular drug thiacetazone (TAC). This chain is Hydroxymycolate synthase MmaA4 (mmaA4), found in Mycobacterium tuberculosis (strain ATCC 25618 / H37Rv).